Reading from the N-terminus, the 359-residue chain is DNA polymerase IV (359 aa).

The region spanning 4 to 185 is the UmuC domain; that stretch reads IIHIDMDCYF…LSLRKIPGVG (182 aa). 2 residues coordinate Mg(2+): Asp-8 and Asp-103. Glu-104 is a catalytic residue.

This sequence belongs to the DNA polymerase type-Y family. Monomer. It depends on Mg(2+) as a cofactor.

The protein localises to the cytoplasm. It catalyses the reaction DNA(n) + a 2'-deoxyribonucleoside 5'-triphosphate = DNA(n+1) + diphosphate. Its function is as follows. Poorly processive, error-prone DNA polymerase involved in untargeted mutagenesis. Copies undamaged DNA at stalled replication forks, which arise in vivo from mismatched or misaligned primer ends. These misaligned primers can be extended by PolIV. Exhibits no 3'-5' exonuclease (proofreading) activity. May be involved in translesional synthesis, in conjunction with the beta clamp from PolIII. In Shewanella sp. (strain MR-4), this protein is DNA polymerase IV.